The primary structure comprises 922 residues: Probable dipeptidyl-aminopeptidase B (922 aa).

Positions 1 to 16 (MATEKGHSRDDEERVP) are enriched in basic and acidic residues. The segment at 1–21 (MATEKGHSRDDEERVPLTRGS) is disordered. Residues 1-99 (MATEKGHSRD…KPMHKSVKIA (99 aa)) are Cytoplasmic-facing. The helical; Signal-anchor for type II membrane protein transmembrane segment at 100–120 (LWSLLFLSLGGWSLAFVLFIF) threads the bilayer. Over 121–922 (RSHDTYQTPI…AGLYKFKHLC (802 aa)) the chain is Vacuolar. Residues asparagine 135, asparagine 200, asparagine 351, and asparagine 574 are each glycosylated (N-linked (GlcNAc...) asparagine). Catalysis depends on serine 756, which acts as the Charge relay system. The N-linked (GlcNAc...) asparagine glycan is linked to asparagine 815. Active-site charge relay system residues include aspartate 833 and histidine 866. Asparagine 902 carries N-linked (GlcNAc...) asparagine glycosylation.

It belongs to the peptidase S9B family.

It localises to the vacuole membrane. The enzyme catalyses Release of an N-terminal dipeptide, Xaa-Yaa-|-Zaa-, from a polypeptide, preferentially when Yaa is Pro, provided Zaa is neither Pro nor hydroxyproline.. In terms of biological role, type IV dipeptidyl-peptidase which removes N-terminal dipeptides sequentially from polypeptides having unsubstituted N-termini provided that the penultimate residue is proline. The protein is Probable dipeptidyl-aminopeptidase B (DAPB) of Ajellomyces capsulatus (strain NAm1 / WU24) (Darling's disease fungus).